Here is a 510-residue protein sequence, read N- to C-terminus: ETS translocation variant 5 (510 aa).

The segment at 132–245 is disordered; sequence KPLTPPATPL…PGDSRPSYHR (114 aa). Over residues 163–174 the composition is skewed to low complexity; that stretch reads TPGAGPVQGVGP. The segment covering 211 to 224 has biased composition (polar residues); it reads QYPSEQRFQRQLSE. S248 is modified (phosphoserine). Residue K350 forms a Glycyl lysine isopeptide (Lys-Gly) (interchain with G-Cter in SUMO2) linkage. Residues 368-448 constitute a DNA-binding region (ETS); it reads LQLWQFLVTL…AGERYVYKFV (81 aa).

This sequence belongs to the ETS family. Interacts (via C-terminal) with ZMYM5 (via N-terminal 120 amino acid region). In terms of tissue distribution, in the brain, expressed predominantly in the cerebral cortex, the amygdala and the hypothalamus. Within the cerebral cortex, there is conspicuously high expression in cortical layers 2, 4 and 6 while expression is almost absent from layers 1, 3 and 5. High expression is also observed in the dorsal and ventral endopiriform claustrum. Strong expression is observed in limited parts of the amygdala including the basolateral amygdaloid nucleus, the bed stria terminalis and the central amygdaloid nucleus. Low to moderate levels are found in the hypothalamus while expression is almost absent in the thalamus. Hypothalamic expression is seen in the dorsomedial hypothalamic nucleus and also the central, dorsomedial and ventrolateral parts of the ventromedial hypothalamic nucleus. Strong expression is also identified in the nigrostriatal tract. In the mesencephalon, expression is restricted to the ventral tegmental area including the parabrachial pigmented nucleus. In the hippocampus, strongly expressed in the pyramidal cell layer. Some expression is also found in the lacunosum moleculare layer. Low levels of expression in the cerebellum, including the granular, molecular and Purkinje cell layers.

The protein localises to the nucleus. Its function is as follows. Binds to DNA sequences containing the consensus nucleotide core sequence 5'-GGAA.-3'. The polypeptide is ETS translocation variant 5 (Etv5) (Mus musculus (Mouse)).